The sequence spans 83 residues: Transmembrane protein EP84R (83 aa).

2 consecutive transmembrane segments (helical) span residues 31-51 and 59-79; these read IIGV…IIIL and TGSI…FLIY.

Belongs to the asfivirus EP84R family.

It localises to the virion membrane. The protein is Transmembrane protein EP84R of Ornithodoros (relapsing fever ticks).